The chain runs to 418 residues: Light-independent protochlorophyllide reductase subunit N (418 aa).

Cys17, Cys42, and Cys103 together coordinate [4Fe-4S] cluster.

The protein belongs to the BchN/ChlN family. Protochlorophyllide reductase is composed of three subunits; ChlL, ChlN and ChlB. Forms a heterotetramer of two ChlB and two ChlN subunits. The cofactor is [4Fe-4S] cluster.

The catalysed reaction is chlorophyllide a + oxidized 2[4Fe-4S]-[ferredoxin] + 2 ADP + 2 phosphate = protochlorophyllide a + reduced 2[4Fe-4S]-[ferredoxin] + 2 ATP + 2 H2O. Its pathway is porphyrin-containing compound metabolism; chlorophyll biosynthesis (light-independent). Its function is as follows. Component of the dark-operative protochlorophyllide reductase (DPOR) that uses Mg-ATP and reduced ferredoxin to reduce ring D of protochlorophyllide (Pchlide) to form chlorophyllide a (Chlide). This reaction is light-independent. The NB-protein (ChlN-ChlB) is the catalytic component of the complex. This Prochlorococcus marinus (strain AS9601) protein is Light-independent protochlorophyllide reductase subunit N.